The primary structure comprises 519 residues: Keratin, type II cytoskeletal 1b (519 aa).

The head stretch occupies residues 1-166 (MSRQFSSQSA…DPEIQKIKTQ (166 aa)). Omega-N-methylarginine occurs at positions 81 and 95. The coil 1A stretch occupies residues 167 to 202 (EREQIKTLNNKFASFIDKVRFLEQQNQVLQTKWELL). The IF rod domain occupies 167–480 (EREQIKTLNN…ELLEGEESRM (314 aa)). The segment at 203–221 (QQVNTSTRTSSLEPIFEEF) is linker 1. Residues 222 to 313 (INQLQRQVDV…YLFDTELSQI (92 aa)) are coil 1B. Positions 314 to 337 (QTHVSDTNVILSMDNNRSLDLDSI) are linker 12. The coil 2 stretch occupies residues 338 to 476 (INAVRTQYEL…ATYRELLEGE (139 aa)). A tail region spans residues 477–519 (ESRMSGALQSQVSIWALPSNEGNDLGERLHDPQSQVPVPKLGC). Positions 499 to 519 (NDLGERLHDPQSQVPVPKLGC) are disordered.

The protein belongs to the intermediate filament family. Post-translationally, undergoes deimination of some arginine residues (citrullination).

In Rattus norvegicus (Rat), this protein is Keratin, type II cytoskeletal 1b (Krt77).